Reading from the N-terminus, the 567-residue chain is MLRSALLSAVLPLLRAQPFPCPKTCKCVVRDAAQCSGGSVAHIAELGLPTNLTHILLFRMDQGILRNHSFSGMTVLQRQMLSDSHISAIDPGTFNDLVKLKTLRLTRNKISRLPRAILDKMVLLEQLFLDHNALRDLDQNLFQQLRNLQELGLNQNQLSFLPANLFSSLRELKLLDLSRNNLTHLPKGLLGAQVKLEKLLLYSNQLTSVDSGLLSNLGALTELRLERNHLRSVAPGAFDRLGNLSSLTLSGNLLESLPPALFLHVSSVSRLTLFENPLEELPDVLFGEMAGLRELWLNGTHLSTLPAAAFRNLSGLQTLGLTRNPRLSALPRGVFQGLRELRVLGLHTNALAELRDDALRGLGHLRQVSLRHNRLRALPRTLFRNLSSLESVQLEHNQLETLPGDVFAALPQLTQVLLGHNPWLCDCGLWRFLQWLRHHPDILGRDEPPQCRGPEPRASLSFWELLQGDPWCPDPRSLPLDPPTENALEAPVPSWLPNSWQSQTWAQLVARGESPNNRLYWGLYILLLVAQAIIAAFIVFAMIKIGQLFRTLIREKLLLEAMGKSCN.

The signal sequence occupies residues 1 to 16; sequence MLRSALLSAVLPLLRA. Positions 17–50 constitute an LRRNT domain; sequence QPFPCPKTCKCVVRDAAQCSGGSVAHIAELGLPT. Over 17–522 the chain is Extracellular; sequence QPFPCPKTCK…ESPNNRLYWG (506 aa). Asparagine 51 and asparagine 67 each carry an N-linked (GlcNAc...) asparagine glycan. 14 LRR repeats span residues 75-96, 99-120, 123-144, 147-168, 171-193, 195-216, 219-240, 243-264, 267-288, 291-312, 315-337, 340-361, 364-385, and 388-409; these read VLQR…TFND, KLKT…ILDK, LLEQ…LFQQ, NLQE…LFSS, ELKL…LGAQ, KLEK…LLSN, ALTE…AFDR, NLSS…LFLH, SVSR…LFGE, GLRE…AFRN, GLQT…VFQG, ELRV…ALRG, HLRQ…LFRN, and SLES…VFAA. A glycan (N-linked (GlcNAc...) asparagine) is linked at asparagine 181. A glycan (N-linked (GlcNAc...) asparagine) is linked at asparagine 243. Residues asparagine 298 and asparagine 312 are each glycosylated (N-linked (GlcNAc...) asparagine). Residue asparagine 385 is glycosylated (N-linked (GlcNAc...) asparagine). Residues 421 to 474 enclose the LRRCT domain; that stretch reads NPWLCDCGLWRFLQWLRHHPDILGRDEPPQCRGPEPRASLSFWELLQGDPWCPD. A helical transmembrane segment spans residues 523-543; the sequence is LYILLLVAQAIIAAFIVFAMI. Over 544-567 the chain is Cytoplasmic; that stretch reads KIGQLFRTLIREKLLLEAMGKSCN.

It localises to the membrane. In terms of biological role, the GPIb-V-IX complex functions as the vWF receptor and mediates vWF-dependent platelet adhesion to blood vessels. The adhesion of platelets to injured vascular surfaces in the arterial circulation is a critical initiating event in hemostasis. The chain is Platelet glycoprotein V (Gp5) from Mus musculus (Mouse).